The following is a 66-amino-acid chain: Large ribosomal subunit protein bL32 (66 aa).

The protein belongs to the bacterial ribosomal protein bL32 family.

This Leptospira interrogans serogroup Icterohaemorrhagiae serovar copenhageni (strain Fiocruz L1-130) protein is Large ribosomal subunit protein bL32.